A 207-amino-acid chain; its full sequence is Octanoyltransferase (207 aa).

One can recognise a BPL/LPL catalytic domain in the interval 27–203 (ASTEDELWVV…HLETQFTPKA (177 aa)). Substrate contacts are provided by residues 66-73 (RGGQITYH), 133-135 (SLG), and 146-148 (GLA). Cys164 serves as the catalytic Acyl-thioester intermediate.

It belongs to the LipB family.

It is found in the cytoplasm. It carries out the reaction octanoyl-[ACP] + L-lysyl-[protein] = N(6)-octanoyl-L-lysyl-[protein] + holo-[ACP] + H(+). The protein operates within protein modification; protein lipoylation via endogenous pathway; protein N(6)-(lipoyl)lysine from octanoyl-[acyl-carrier-protein]: step 1/2. In terms of biological role, catalyzes the transfer of endogenously produced octanoic acid from octanoyl-acyl-carrier-protein onto the lipoyl domains of lipoate-dependent enzymes. Lipoyl-ACP can also act as a substrate although octanoyl-ACP is likely to be the physiological substrate. The protein is Octanoyltransferase of Neisseria meningitidis serogroup C / serotype 2a (strain ATCC 700532 / DSM 15464 / FAM18).